The primary structure comprises 479 residues: MESSKPKNRNPMKKPVSITMEHVLLALRETMDEREIRIRSLFDFFDNSNLGFLDYAQIEKGLASLQIPPEYKYARDLFRVCDANRDGRVDYQEFRRYIDAKELELYRIFQAIDVEHNGCILPEELWEALVKAGIEIDDEELARFVEHVDKDNNGTITFEEWRDFLLLYPHEATLENIYHHWERVCLIDIGEQAVIPDGISKHVKRSRLLLAGGLAGAVSRTATAPLDRLKVVLQVQRAHAGVLPTIKKIWREDKLMGFFRGNGLNVMKVAPESAIKFCAYEMLKPMIGGEDGDIGTSGRLMAGGMAGALAQTAIYPMDLVKTRLQTCVSEGGKAPKLWKLTKDIWVREGPRAFYKGLFPSLLGIVPYAGIDLAAYETLKDLSRTYILQDTEPGPLIQLSCGMTSGALGASCVYPLQVVRTRMQADSSKTTMKQEFMNTMKGEGLRGFYRGLLPNLLKVVPAASITYIVYEAMKKNMALD.

Residues 1-208 are Mitochondrial intermembrane-facing; that stretch reads MESSKPKNRN…ISKHVKRSRL (208 aa). 4 consecutive EF-hand domains span residues 33-68, 69-104, 105-135, and 136-171; these read EREI…LQIP, PEYK…KELE, LYRI…AGIE, and IDDE…YPHE. The Ca(2+) site is built by Asp-82, Asn-84, Asp-86, Arg-88, and Glu-93. Positions 149, 151, 153, 155, and 160 each coordinate Ca(2+). Solcar repeat units lie at residues 203-286, 294-381, and 392-475; these read VKRS…LKPM, IGTS…LKDL, and PGPL…MKKN. A helical membrane pass occupies residues 209 to 226; that stretch reads LLAGGLAGAVSRTATAPL. Residues 227–260 lie on the Mitochondrial matrix side of the membrane; the sequence is DRLKVVLQVQRAHAGVLPTIKKIWREDKLMGFFR. A helical membrane pass occupies residues 261 to 280; sequence GNGLNVMKVAPESAIKFCAY. The Mitochondrial intermembrane segment spans residues 281–303; sequence EMLKPMIGGEDGDIGTSGRLMAG. A helical membrane pass occupies residues 304-317; sequence GMAGALAQTAIYPM. Topologically, residues 318–355 are mitochondrial matrix; sequence DLVKTRLQTCVSEGGKAPKLWKLTKDIWVREGPRAFYK. A helical transmembrane segment spans residues 356–375; sequence GLFPSLLGIVPYAGIDLAAY. Residues 376–397 lie on the Mitochondrial intermembrane side of the membrane; that stretch reads ETLKDLSRTYILQDTEPGPLIQ. A helical transmembrane segment spans residues 398–415; that stretch reads LSCGMTSGALGASCVYPL. At 416-449 the chain is on the mitochondrial matrix side; that stretch reads QVVRTRMQADSSKTTMKQEFMNTMKGEGLRGFYR. The chain crosses the membrane as a helical span at residues 450-469; the sequence is GLLPNLLKVVPAASITYIVY. Residues 470 to 479 lie on the Mitochondrial intermembrane side of the membrane; that stretch reads EAMKKNMALD.

This sequence belongs to the mitochondrial carrier (TC 2.A.29) family. Expressed in flowers, leaves, stems, roots and seedlings, mostly in seedlings.

It localises to the mitochondrion inner membrane. Counter-exchange transport activity is saturable and inhibited by pyridoxal-5'-phosphate, EDTA and EGTA. Activated by calcium Ca(2+) and manganese Mn(2+) ions, and slightly by iron Fe(2+) and zinc Zn(2+) ions. Repressed by copper ions Cu(2+) and slightly by magnesium Mg(2+) ions. Magnesium Mg(2+) ions promotes slightly ATP uptake, ATP-Mg(2+) being exchanged with ATP(4-). Its function is as follows. Calcium-dependent mitochondrial carrier protein that catalyzes the import of ATP co-transported with metal divalent cations across the mitochondrial inner membrane in exchange for phosphate (Pi). Can transport phosphate, AMP, ADP, ATP, adenosine 5'-phosphosulfate, sulfate and thiosulfate, and, to a lesser extent, other nucleotides. Binds calcium ions Ca(2+). Also mediates calcium uptake. This is Calcium-dependent mitochondrial ATP-magnesium/phosphate carrier protein 3 from Arabidopsis thaliana (Mouse-ear cress).